Reading from the N-terminus, the 139-residue chain is Large-conductance mechanosensitive channel (139 aa).

Helical transmembrane passes span 9 to 29 (AFAVKGNVVDMAVGIIIGAAF) and 79 to 99 (IQTVIDFVIVAFAIFMGVKAI).

The protein belongs to the MscL family. In terms of assembly, homopentamer.

It localises to the cell inner membrane. Its function is as follows. Channel that opens in response to stretch forces in the membrane lipid bilayer. May participate in the regulation of osmotic pressure changes within the cell. The sequence is that of Large-conductance mechanosensitive channel from Pseudomonas putida (strain GB-1).